The primary structure comprises 278 residues: TATA box-binding protein-associated factor RNA polymerase I subunit D (278 aa).

2 disordered regions span residues 20-71 and 88-116; these read ANRS…SSFE and KKRY…RNPI. Residues 22 to 33 show a composition bias toward polar residues; sequence RSDNSSDSSLFK. Phosphoserine is present on serine 23. Over residues 88–99 the composition is skewed to basic residues; the sequence is KKRYKKKKKRRY. 2 positions are modified to phosphoserine: serine 138 and serine 234.

In terms of assembly, component of the transcription factor SL1/TIF-IB complex, composed of TBP and at least TAF1A, TAF1B, TAF1C and TAF1D. Interacts with UBTF.

The protein resides in the nucleus. Component of the transcription factor SL1/TIF-IB complex, which is involved in the assembly of the PIC (preinitiation complex) during RNA polymerase I-dependent transcription. The rate of PIC formation probably is primarily dependent on the rate of association of SL1/TIF-IB with the rDNA promoter. SL1/TIF-IB is involved in stabilization of nucleolar transcription factor 1/UBTF on rDNA. Formation of SL1/TIF-IB excludes the association of TBP with TFIID subunits. This Homo sapiens (Human) protein is TATA box-binding protein-associated factor RNA polymerase I subunit D (TAF1D).